A 667-amino-acid chain; its full sequence is Bifunctional polymyxin resistance protein ArnA (667 aa).

The segment at methionine 1–leucine 304 is formyltransferase ArnAFT. Residue histidine 104 is the Proton donor; for formyltransferase activity of the active site. (6R)-10-formyltetrahydrofolate is bound by residues arginine 114 and valine 136–aspartate 140. A dehydrogenase ArnADH region spans residues arginine 314–alanine 667. NAD(+)-binding positions include aspartate 347 and aspartate 368–isoleucine 369. UDP-alpha-D-glucuronate-binding positions include alanine 393, tyrosine 398, and threonine 432–serine 433. Glutamate 434 (proton acceptor; for decarboxylase activity) is an active-site residue. Residues arginine 460, asparagine 492, lysine 526–arginine 535, and tyrosine 613 each bind UDP-alpha-D-glucuronate. Residue arginine 619 is the Proton donor; for decarboxylase activity of the active site.

This sequence in the N-terminal section; belongs to the Fmt family. UDP-L-Ara4N formyltransferase subfamily. The protein in the C-terminal section; belongs to the NAD(P)-dependent epimerase/dehydratase family. UDP-glucuronic acid decarboxylase subfamily. As to quaternary structure, homohexamer, formed by a dimer of trimers.

It carries out the reaction UDP-alpha-D-glucuronate + NAD(+) = UDP-beta-L-threo-pentopyranos-4-ulose + CO2 + NADH. The enzyme catalyses UDP-4-amino-4-deoxy-beta-L-arabinose + (6R)-10-formyltetrahydrofolate = UDP-4-deoxy-4-formamido-beta-L-arabinose + (6S)-5,6,7,8-tetrahydrofolate + H(+). Its pathway is nucleotide-sugar biosynthesis; UDP-4-deoxy-4-formamido-beta-L-arabinose biosynthesis; UDP-4-deoxy-4-formamido-beta-L-arabinose from UDP-alpha-D-glucuronate: step 1/3. The protein operates within nucleotide-sugar biosynthesis; UDP-4-deoxy-4-formamido-beta-L-arabinose biosynthesis; UDP-4-deoxy-4-formamido-beta-L-arabinose from UDP-alpha-D-glucuronate: step 3/3. It participates in bacterial outer membrane biogenesis; lipopolysaccharide biosynthesis. Functionally, bifunctional enzyme that catalyzes the oxidative decarboxylation of UDP-glucuronic acid (UDP-GlcUA) to UDP-4-keto-arabinose (UDP-Ara4O) and the addition of a formyl group to UDP-4-amino-4-deoxy-L-arabinose (UDP-L-Ara4N) to form UDP-L-4-formamido-arabinose (UDP-L-Ara4FN). The modified arabinose is attached to lipid A and is required for resistance to polymyxin and cationic antimicrobial peptides. This Yersinia pseudotuberculosis serotype IB (strain PB1/+) protein is Bifunctional polymyxin resistance protein ArnA.